We begin with the raw amino-acid sequence, 482 residues long: Histone deacetylase 1 (482 aa).

The segment at 9–321 (RKVCYYYDGD…WTYETAVALD (313 aa)) is histone deacetylase. The 1D-myo-inositol 1,4,5,6-tetrakisphosphate site is built by Gly27 and Lys31. Residue Lys74 is modified to N6-acetyllysine; alternate. Residue Lys74 forms a Glycyl lysine isopeptide (Lys-Gly) (interchain with G-Cter in SUMO2); alternate linkage. His141 is a catalytic residue. Residues Asp176 and His178 each coordinate Zn(2+). Residue Lys220 is modified to N6-acetyllysine. The residue at position 261 (Cys261) is an S-nitrosocysteine. A Zn(2+)-binding site is contributed by Asp264. Arg270 provides a ligand contact to 1D-myo-inositol 1,4,5,6-tetrakisphosphate. The residue at position 273 (Cys273) is an S-nitrosocysteine. Acidic residues predominate over residues 390 to 400 (PEESGDEDEED). Positions 390–482 (PEESGDEDEE…KGVKEEVKMA (93 aa)) are disordered. Phosphoserine occurs at positions 393, 406, 409, 421, and 423. The segment covering 401–416 (PDKRISICSSDKRIAC) has biased composition (basic and acidic residues). A compositionally biased stretch (acidic residues) spans 417-427 (EEEFSDSDEEG). Lys432 carries the post-translational modification N6-methylated lysine; by EHMT2. Residue Lys438 forms a Glycyl lysine isopeptide (Lys-Gly) (interchain with G-Cter in SUMO2) linkage. A compositionally biased stretch (basic and acidic residues) spans 443-482 (VKTEDEKEKDPEEKKEVTEEEKTKEEKPEAKGVKEEVKMA). A Glycyl lysine isopeptide (Lys-Gly) (interchain with G-Cter in SUMO2); alternate cross-link involves residue Lys444. Residue Lys444 forms a Glycyl lysine isopeptide (Lys-Gly) (interchain with G-Cter in SUMO); alternate linkage. Residues Lys456, Lys457, and Lys473 each participate in a glycyl lysine isopeptide (Lys-Gly) (interchain with G-Cter in SUMO2) cross-link. Lys476 participates in a covalent cross-link: Glycyl lysine isopeptide (Lys-Gly) (interchain with G-Cter in SUMO2); alternate. A Glycyl lysine isopeptide (Lys-Gly) (interchain with G-Cter in SUMO); alternate cross-link involves residue Lys476. A Glycyl lysine isopeptide (Lys-Gly) (interchain with G-Cter in SUMO2) cross-link involves residue Lys480.

The protein belongs to the histone deacetylase family. HD type 1 subfamily. As to quaternary structure, part of the core histone deacetylase (HDAC) complex composed of HDAC1, HDAC2, RBBP4 and RBBP7, the core complex associates with SIN3, SAP18 and SAP30 to form the SIN3 HDAC complex. Component of the nucleosome remodeling and deacetylase (NuRD) repressor complex, composed of core proteins MTA1, MTA2, MTA3, RBBP4, RBBP7, HDAC1, HDAC2, MBD2, MBD3, and peripherally associated proteins CDK2AP1, CDK2AP2, GATAD2A, GATAD2B, CHD3, CHD4 and CHD5. The exact stoichiometry of the NuRD complex is unknown, and some subunits such as MBD2 and MBD3, GATAD2A and GATAD2B, and CHD3, CHD4 and CHD5 define mutually exclusive NuRD complexes. Component of a BHC histone deacetylase complex that contains HDAC1, HDAC2, HMG20B/BRAF35, KDM1A, RCOR1/CoREST and PHF21A/BHC80. The BHC complex may also contain ZMYM2, ZNF217, ZMYM3, GSE1 and GTF2I. Component of a mSin3A corepressor complex that contains SIN3A, SAP130, SUDS3/SAP45, ARID4B/SAP180, HDAC1 and HDAC2. Found in a trimeric complex with APBB1 and TSHZ3; the interaction between HDAC1 and APBB1 is mediated by TSHZ3. Forms a complex comprising APPL1, RUVBL2, APPL2, CTNNB1 and HDAC2. Component of a RCOR/GFI/KDM1A/HDAC complex. Part of a complex composed of TRIM28, HDAC1, HDAC2 and EHMT2. Part of a complex containing at least CDYL, MIER1, MIER2, HDAC1 and HDAC2. The large PER complex involved in the histone deacetylation is composed of at least HDAC1, PER2, SFPQ and SIN3A. Associates with the 9-1-1 complex; interacts with HUS1. Found in a complex with DNMT3A and HDAC7. Found in a complex with YY1, SIN3A and GON4L. Identified in a histone deacetylase complex that contains DNTTIP1, HDAC1 and MIDEAS; this complex assembles into a tetramer that contains four copies of each protein chain. Found in a complex composed of at least SINHCAF, SIN3A, HDAC1, SAP30, RBBP4, OGT and TET1. Component of the SIN3B complex, which includes SIN3B, HDAC1, PHF12 and MORF4L1. Interacts with GFI1; the interaction is direct. Interacts directly with GFI1B. Interacts with TSHZ3 (via N-terminus); the interaction is direct. Interacts with APEX1; the interaction is not dependent on the acetylated status of APEX1. Interacts with BANP. Interacts with BAZ2A/TIP5. Interacts with BCL6. Interacts with BCOR. Interacts with BHLHE40/DEC1. Interacts with BRCC3; this interaction is enhanced in the presence of PWWP2B. Interacts with BRMS1. Interacts with BRMS1L. Interacts with C10orf90/FATS (via its N-terminal); the interaction prevents binding of HDAC1 to CDKN1A/p21 and facilitates the acetylation and stabilization of CDKN1A/p21. Interacts with CBFA2T3. Interacts with CCAR2. Interacts with CDK2AP1. Interacts with CHD3. Interacts with CHD4. Interacts with CHFR. Interacts with CIART. Interacts with CDKN1A/p21. Interacts with CDK5 complexed to CDK5R1 (p25). Interacts with CRY1. Interacts with DAXX. Interacts with DDIT3/CHOP. Interacts with DDX5. Interacts with DHX36; this interaction occurs in a RNA-dependent manner. Interacts with DNMT1. Interacts with DNTTIP1. Interacts with E4F1. Interacts with EP300. Interacts with ERCC6. Interacts with GATAD2A. Interacts with HCFC1. Interacts with HDAC9. Interacts with HUS1. Interacts with INSM1. Interacts with KDM4A. Interacts with KDM5A; this interaction impairs histone deacetylation. Interacts with KDM5B. Interacts with KLF1. Interacts with MBD3L2. Interacts with MIER1. Interacts with NFE4. Interacts with NR4A2/NURR1. Interacts with NR1D2 (via C-terminus). Interacts with NRIP1. Interacts with NSD2. Interacts with PACS2. Interacts with PHB2. Interacts with PPHLN1. Interacts with PRDM6. Interacts with PRDM16. Interacts with PWWP2A in a MTA1-dependent manner. Interacts with PWWP2B. Interacts with RB1. Interacts with RERE. Interacts with SANBR (via the BTB domain). Interacts with SAMSN1. Interacts with SAP30L. Interacts with SETDB1. Interacts with SIN3A. Interacts with SMAD3. Interacts with SMAD4; positively regulated by ZBTB7A. Interacts with SMARCAD1. Interacts with SMARCA4/BRG1. Interacts with SMYD2. Interacts with SMYD4 (via MYND-type zinc finger). Interacts with SP1; the interaction deacetylates SP1 and regulates its transcriptional activity. Interacts with SP3; the interaction deacetylates SP3 and regulates its transcriptional activity. In vitro, C(18) ceramides increase this interaction and the subsequent SP3 deacetylation and SP3-mediated repression of the TERT promoter. Interacts with SPEN/MINT. Interacts with SPHK2. Interacts with SUV39H1. Interacts with TGIF. Interacts with TGIF2. Interacts with TRAF6. Interacts with TRIM28; the interaction recruits HDAC1 to E2F1 and inhibits its acetylation. Interacts with TSC22D3 isoform 1; this interaction affects HDAC1 activity on MYOG promoter and thus inhibits MYOD1 transcriptional activity. Interacts with UHRF1. Interacts with UHRF2. Interacts with ZBTB7A. Interacts with ZMYND8. Interacts with ZMYND15. Interacts with ZNF431. Interacts with ZNF516; this interaction is enhanced in the presence of PWWP2B. Interacts with ZNF541. Interacts with ZNF638. Interacts with ZNHIT1. Interacts with the non-histone region of MACROH2A1. Identified in a complex with HDAC2, KCTD19, DNTTIP1 and ZNF541. Interacts with MSX3. Interacts with VRK1. It depends on Zn(2+) as a cofactor. Post-translationally, sumoylated on Lys-444 and Lys-476; which promotes enzymatic activity. Desumoylated by SENP1. In terms of processing, phosphorylation on Ser-421 and Ser-423 promotes enzymatic activity and interactions with NuRD and SIN3 complexes. Phosphorylated by CDK5. Ubiquitinated by CHFR and KCTD11, leading to its degradation by the proteasome.

The protein resides in the nucleus. The catalysed reaction is N(6)-acetyl-L-lysyl-[histone] + H2O = L-lysyl-[histone] + acetate. It carries out the reaction N(6)-acetyl-L-lysyl-[protein] + H2O = L-lysyl-[protein] + acetate. It catalyses the reaction N(6)-(2E)-butenoyl-L-lysyl-[protein] + H2O = (2E)-2-butenoate + L-lysyl-[protein]. The enzyme catalyses N(6)-[(S)-lactoyl]-L-lysyl-[protein] + H2O = (S)-lactate + L-lysyl-[protein]. With respect to regulation, inositol tetraphosphate (1D-myo-inositol 1,4,5,6-tetrakisphosphate) may act as an intermolecular glue between HDAC1 and N-Cor repressor complex components. Functionally, histone deacetylase that catalyzes the deacetylation of lysine residues on the N-terminal part of the core histones (H2A, H2B, H3 and H4). Histone deacetylation gives a tag for epigenetic repression and plays an important role in transcriptional regulation, cell cycle progression and developmental events. Histone deacetylases act via the formation of large multiprotein complexes. Acts as a component of the histone deacetylase NuRD complex which participates in the remodeling of chromatin. As part of the SIN3B complex is recruited downstream of the constitutively active genes transcriptional start sites through interaction with histones and mitigates histone acetylation and RNA polymerase II progression within transcribed regions contributing to the regulation of transcription. Also functions as a deacetylase for non-histone targets, such as NR1D2, RELA, SP1, SP3, STAT3 and TSHZ3. Deacetylates SP proteins, SP1 and SP3, and regulates their function. Component of the BRG1-RB1-HDAC1 complex, which negatively regulates the CREST-mediated transcription in resting neurons. Upon calcium stimulation, HDAC1 is released from the complex and CREBBP is recruited, which facilitates transcriptional activation. Deacetylates TSHZ3 and regulates its transcriptional repressor activity. Deacetylates 'Lys-310' in RELA and thereby inhibits the transcriptional activity of NF-kappa-B. Deacetylates NR1D2 and abrogates the effect of KAT5-mediated relieving of NR1D2 transcription repression activity. Component of a RCOR/GFI/KDM1A/HDAC complex that suppresses, via histone deacetylase (HDAC) recruitment, a number of genes implicated in multilineage blood cell development. Involved in CIART-mediated transcriptional repression of the circadian transcriptional activator: CLOCK-BMAL1 heterodimer. Required for the transcriptional repression of circadian target genes, such as PER1, mediated by the large PER complex or CRY1 through histone deacetylation. In addition to protein deacetylase activity, also has protein-lysine deacylase activity: acts as a protein decrotonylase and delactylase by mediating decrotonylation ((2E)-butenoyl) and delactylation (lactoyl) of histones, respectively. This chain is Histone deacetylase 1 (Hdac1), found in Rattus norvegicus (Rat).